The primary structure comprises 341 residues: BZIP domain-containing transcription factor BZP4 (341 aa).

Polar residues-rich tracts occupy residues 1–32, 61–76, 128–139, and 150–163; these read MESS…PTNE, LTES…SHSL, PLTSHSRSQITH, and YSSS…SPVS. Disordered stretches follow at residues 1–95 and 118–254; these read MESS…PHGM and TNHS…DKKQ. A compositionally biased stretch (low complexity) spans 178–192; that stretch reads SPSSSSFPSSIPRTP. 2 stretches are compositionally biased toward basic and acidic residues: residues 225 to 234 and 242 to 254; these read TGDRKHEKDS and EEYK…DKKQ. Positions 250–269 are basic motif; the sequence is KDKKQVRNRIGARRFRAKRK. One can recognise a bZIP domain in the interval 250–308; it reads KDKKQVRNRIGARRFRAKRKDYVNQLEAGIRLRDDEITNLQSQLESQRNEINELRLQLK. The segment at 279–307 is leucine-zipper; it reads IRLRDDEITNLQSQLESQRNEINELRLQL.

It belongs to the bZIP family.

The protein localises to the nucleus. It is found in the cytoplasm. Transcription factor that promotes the production of melanin, a pigment that serves as antioxidant, reactive oxygen species (ROS) scavenger and that protect fungal pathogens from radiation and host immune responses. This Cryptococcus neoformans var. grubii serotype A (strain H99 / ATCC 208821 / CBS 10515 / FGSC 9487) (Filobasidiella neoformans var. grubii) protein is BZIP domain-containing transcription factor BZP4.